Consider the following 56-residue polypeptide: Large ribosomal subunit protein bL33 (56 aa).

Belongs to the bacterial ribosomal protein bL33 family.

This chain is Large ribosomal subunit protein bL33, found in Tropheryma whipplei (strain TW08/27) (Whipple's bacillus).